Consider the following 498-residue polypeptide: ATP synthase subunit beta, chloroplastic (498 aa).

172-179 is an ATP binding site; sequence GGAGVGKT.

This sequence belongs to the ATPase alpha/beta chains family. As to quaternary structure, F-type ATPases have 2 components, CF(1) - the catalytic core - and CF(0) - the membrane proton channel. CF(1) has five subunits: alpha(3), beta(3), gamma(1), delta(1), epsilon(1). CF(0) has four main subunits: a(1), b(1), b'(1) and c(9-12).

Its subcellular location is the plastid. The protein localises to the chloroplast thylakoid membrane. The catalysed reaction is ATP + H2O + 4 H(+)(in) = ADP + phosphate + 5 H(+)(out). Functionally, produces ATP from ADP in the presence of a proton gradient across the membrane. The catalytic sites are hosted primarily by the beta subunits. The chain is ATP synthase subunit beta, chloroplastic from Vitis vinifera (Grape).